The following is a 156-amino-acid chain: Small ribosomal subunit protein uS7 (156 aa).

It belongs to the universal ribosomal protein uS7 family. Part of the 30S ribosomal subunit. Contacts proteins S9 and S11.

Functionally, one of the primary rRNA binding proteins, it binds directly to 16S rRNA where it nucleates assembly of the head domain of the 30S subunit. Is located at the subunit interface close to the decoding center, probably blocks exit of the E-site tRNA. The protein is Small ribosomal subunit protein uS7 of Trichlorobacter lovleyi (strain ATCC BAA-1151 / DSM 17278 / SZ) (Geobacter lovleyi).